The chain runs to 525 residues: DNA polymerase epsilon subunit 2 (525 aa).

It belongs to the DNA polymerase epsilon subunit B family. In terms of assembly, component of the epsilon DNA polymerase complex consisting of four subunits: the catalytic subunit PolE1/DNApol-epsilon255 and the accessory subunits PolE2/DNApol-epsilon58, Chrac-14/DNApolE3 and PolE4.

Its subcellular location is the nucleus. In terms of biological role, accessory component of the DNA polymerase epsilon complex. Participates in DNA repair and in chromosomal DNA replication. Has a role in the entrance and progression through S phase. Has a role in endoreplication. Essential for viability and tissue development. This chain is DNA polymerase epsilon subunit 2, found in Drosophila melanogaster (Fruit fly).